Reading from the N-terminus, the 496-residue chain is Pyrrole-2-carboxylic acid decarboxylase (496 aa).

W166 is a K(+) binding site. Residues V168, R170, Q187, and H188 each contribute to the prenylated FMN site. Position 188 (H188) interacts with Mn(2+). Residues A218, A219, M221, and E229 each coordinate K(+). A prenylated FMN-binding site is contributed by E229. Residue E229 coordinates Mn(2+). Catalysis depends on E278, which acts as the Proton donor. H386 contacts prenylated FMN.

This sequence belongs to the UbiD family. UbiD-like/FDC subfamily. As to quaternary structure, homodimer. Requires prenylated FMN as cofactor. Mn(2+) serves as cofactor. It depends on K(+) as a cofactor.

It carries out the reaction pyrrole-2-carboxylate + H(+) = 1H-pyrrole + CO2. The enzyme catalyses pyrrole-2-carboxylate + H2O = 1H-pyrrole + hydrogencarbonate. Imidazole acts as a reversible inhibitor via the formation of an imidazole-prenyl-FMN adduct. Activity is light sensitive. In terms of biological role, catalyzes the prenyl-FMN-dependent decarboxylation of pyrrole-2-carboxylate (P2C). Can also catalyze the carboxylation of pyrrole in the presence of elevated concentrations of CO(2) or bicarbonate. Can accept a modest range of heteroaromatic compounds such as 3-methylpyrrole-2-carboxylate, indole-3-carboxylate and furan-2-carboxylate, and shows very low activity with thiophene-2-carboxylate. Attenuates the virulence of P.aeruginosa in a Drosophila model when overexpressed. The sequence is that of Pyrrole-2-carboxylic acid decarboxylase from Pseudomonas aeruginosa (strain ATCC 15692 / DSM 22644 / CIP 104116 / JCM 14847 / LMG 12228 / 1C / PRS 101 / PAO1).